A 157-amino-acid chain; its full sequence is Vitamin K-dependent protein C (157 aa).

Residues 1-157 enclose the Peptidase S1 domain; it reads EKWELDLDIK…GCGRLHNYGV (157 aa). Asn-17 carries N-linked (GlcNAc...) asparagine glycosylation. The active-site Charge relay system is Asp-26. Asn-78 carries an N-linked (GlcNAc...) asparagine glycan. Disulfide bonds link Cys-96/Cys-110 and Cys-121/Cys-149. The active-site Charge relay system is the Ser-125.

This sequence belongs to the peptidase S1 family. In terms of tissue distribution, plasma; synthesized in the liver.

The protein localises to the secreted. It is found in the golgi apparatus. It localises to the endoplasmic reticulum. The enzyme catalyses Degradation of blood coagulation factors Va and VIIIa.. Protein C is a vitamin K-dependent serine protease that regulates blood coagulation by inactivating factors Va and VIIIa in the presence of calcium ions and phospholipids. Exerts a protective effect on the endothelial cell barrier function. The protein is Vitamin K-dependent protein C (PROC) of Felis catus (Cat).